The following is a 95-amino-acid chain: Aspartyl/glutamyl-tRNA(Asn/Gln) amidotransferase subunit C (95 aa).

This sequence belongs to the GatC family. As to quaternary structure, heterotrimer of A, B and C subunits.

The catalysed reaction is L-glutamyl-tRNA(Gln) + L-glutamine + ATP + H2O = L-glutaminyl-tRNA(Gln) + L-glutamate + ADP + phosphate + H(+). It catalyses the reaction L-aspartyl-tRNA(Asn) + L-glutamine + ATP + H2O = L-asparaginyl-tRNA(Asn) + L-glutamate + ADP + phosphate + 2 H(+). Allows the formation of correctly charged Asn-tRNA(Asn) or Gln-tRNA(Gln) through the transamidation of misacylated Asp-tRNA(Asn) or Glu-tRNA(Gln) in organisms which lack either or both of asparaginyl-tRNA or glutaminyl-tRNA synthetases. The reaction takes place in the presence of glutamine and ATP through an activated phospho-Asp-tRNA(Asn) or phospho-Glu-tRNA(Gln). The chain is Aspartyl/glutamyl-tRNA(Asn/Gln) amidotransferase subunit C from Jannaschia sp. (strain CCS1).